The primary structure comprises 418 residues: Elongation factor 1-gamma 1 (418 aa).

One can recognise a GST N-terminal domain in the interval methionine 1 to proline 82. A GST C-terminal domain is found at serine 87 to proline 213. The disordered stretch occupies residues serine 211–leucine 265. Basic and acidic residues predominate over residues alanine 221–lysine 246. The region spanning proline 258–lysine 418 is the EF-1-gamma C-terminal domain.

In terms of assembly, EF-1 is composed of four subunits: alpha, beta, delta, and gamma.

Probably plays a role in anchoring the complex to other cellular components. In Oryza sativa subsp. japonica (Rice), this protein is Elongation factor 1-gamma 1.